A 219-amino-acid polypeptide reads, in one-letter code: MKAINIALDGPAAAGKSTIAKRVASELSMIYVDTGAMYRALTYKYLKLNKTEDFAKLVDQTTLDLTYKADKGQCVILDNEDVTDFLRNNDVTQHVSYVASKEPVRLFAVKKQKELAAEKGIVMDGRDIGTVVLPDADLKVYMIASVEERAERRYKDNQLRGIESNFEDLKRDIEARDQYDMNREISPLRKADDAVTLDTTGKTIEEVTDEILAMVSQIK.

Position 10–18 (10–18) interacts with ATP; sequence GPAAAGKST.

Belongs to the cytidylate kinase family. Type 1 subfamily.

The protein resides in the cytoplasm. It catalyses the reaction CMP + ATP = CDP + ADP. The catalysed reaction is dCMP + ATP = dCDP + ADP. The protein is Cytidylate kinase of Staphylococcus aureus (strain bovine RF122 / ET3-1).